The sequence spans 805 residues: Leucine--tRNA ligase (805 aa).

The short motif at 40–51 (PYPSGQGLHVGH) is the 'HIGH' region element. The 'KMSKS' region motif lies at 577 to 581 (KMSKS). An ATP-binding site is contributed by lysine 580.

The protein belongs to the class-I aminoacyl-tRNA synthetase family.

The protein resides in the cytoplasm. It carries out the reaction tRNA(Leu) + L-leucine + ATP = L-leucyl-tRNA(Leu) + AMP + diphosphate. This Limosilactobacillus fermentum (strain NBRC 3956 / LMG 18251) (Lactobacillus fermentum) protein is Leucine--tRNA ligase.